Consider the following 138-residue polypeptide: Phospholipase A2 group V (138 aa).

A signal peptide spans Met1–Gly20. 6 cysteine pairs are disulfide-bonded: Cys46–Cys137, Cys48–Cys64, Cys63–Cys117, Cys70–Cys110, Cys79–Cys103, and Cys97–Cys108. Positions 47, 49, and 51 each coordinate Ca(2+). His67 is a catalytic residue. Asp68 is a Ca(2+) binding site. The active site involves Asp111.

It belongs to the phospholipase A2 family. It depends on Ca(2+) as a cofactor. In terms of processing, this enzyme lacks one of the seven disulfide bonds found in similar PLA2 proteins. In terms of tissue distribution, heart, placenta and less abundantly, in lung. Detected in the outer and inner plexiform layers of the retina (at protein level). Expressed in monocytes and macrophages.

It is found in the secreted. The protein resides in the cell membrane. It localises to the cytoplasmic vesicle. Its subcellular location is the phagosome. The protein localises to the recycling endosome. It is found in the golgi apparatus. The protein resides in the cis-Golgi network. It localises to the trans-Golgi network. It catalyses the reaction a 1,2-diacyl-sn-glycero-3-phosphocholine + H2O = a 1-acyl-sn-glycero-3-phosphocholine + a fatty acid + H(+). The enzyme catalyses 1-hexadecanoyl-2-(9Z-octadecenoyl)-sn-glycero-3-phosphocholine + H2O = 1-hexadecanoyl-sn-glycero-3-phosphocholine + (9Z)-octadecenoate + H(+). The catalysed reaction is 1-hexadecanoyl-2-(5Z,8Z,11Z,14Z-eicosatetraenoyl)-sn-glycero-3-phosphocholine + H2O = 1-hexadecanoyl-sn-glycero-3-phosphocholine + (5Z,8Z,11Z,14Z)-eicosatetraenoate + H(+). It carries out the reaction 1-hexadecanoyl-2-(9Z,12Z-octadecadienoyl)-sn-glycero-3-phosphoethanolamine + H2O = 1-hexadecanoyl-sn-glycero-3-phosphoethanolamine + (9Z,12Z)-octadecadienoate + H(+). It catalyses the reaction 1-hexadecanoyl-2-(5Z,8Z,11Z,14Z-eicosatetraenoyl)-sn-glycero-3-phosphoethanolamine + H2O = 1-hexadecanoyl-sn-glycero-3-phosphoethanolamine + (5Z,8Z,11Z,14Z)-eicosatetraenoate + H(+). The enzyme catalyses 1-octadecanoyl-2-(5Z,8Z,11Z,14Z-eicosatetraenoyl)-sn-glycero-3-phospho-(1D-myo-inositol) + H2O = 1-octadecanoyl-sn-glycero-3-phospho-(1D-myo-inositol) + (5Z,8Z,11Z,14Z)-eicosatetraenoate + H(+). The catalysed reaction is 1-hexadecanoyl-2-(9Z-octadecenoyl)-sn-glycero-3-phosphoglycerol + H2O = 1-hexadecanoyl-sn-glycero-3-phosphoglycerol + (9Z)-octadecenoate + H(+). It carries out the reaction N-hexadecanoyl-1,2-di-(9Z-octadecenoyl)-sn-glycero-3-phosphoethanolamine + H2O = N-hexadecanoyl-1-(9Z-octadecenoyl)-sn-glycero-3-phosphoethanolamine + (9Z)-octadecenoate + H(+). It catalyses the reaction 1'-[1,2-di-(9Z-octadecenoyl)-sn-glycero-3-phospho]-3'-[1-(9Z-octadecenoyl)-sn-glycero-3-phospho]-glycerol + H2O = 1',3'-bis-[1-(9Z-octadecenoyl)-sn-glycero-3-phospho]-glycerol + (9Z)-octadecenoate + H(+). The enzyme catalyses 1',3'-bis[1,2-di-(9Z-octadecenoyl)-sn-glycero-3-phospho]-glycerol + H2O = 1'-[1,2-di-(9Z-octadecenoyl)-sn-glycero-3-phospho]-3'-[1-(9Z-octadecenoyl)-sn-glycero-3-phospho]-glycerol + (9Z)-octadecenoate + H(+). It functions in the pathway lipid metabolism; phospholipid metabolism. Its pathway is lipid metabolism; leukotriene B4 biosynthesis. The protein operates within lipid metabolism; leukotriene C4 biosynthesis. With respect to regulation, activated by cardiolipin. Secretory calcium-dependent phospholipase A2 that primarily targets extracellular phospholipids. Hydrolyzes the ester bond of the fatty acyl group attached at sn-2 position of phospholipids (phospholipase A2 activity), preferentially releasing fatty acyl groups with a low degree of unsaturation such as oleoyl (C18:1) and linoleoyl (C18:2) groups. Hydrolyzes low-density lipoprotein (LDL) phospholipids releasing unsaturated fatty acids that drive macrophage polarization toward an M2 phenotype. May act in an autocrine and paracrine manner. Contributes to lipid remodeling of cellular membranes at different subcellular locations and generation of lipid mediators involved in pathogen clearance. Cleaves sn-2 fatty acyl chains of cardiolipin, a major component of the inner membrane of mitochondria and bacterial membranes. Promotes phagocytosis of bacteria in macrophages through production of lysophosphatidylethanolamines. Displays bactericidal activity against Gram-positive bacteria by directly hydrolyzing phospholipids of the bacterial membrane. Promotes phagocytosis and killing of ingested fungi likely through controlling phagosome-lysosome fusion and phagosome maturation. Plays a role in biosynthesis of cysteinyl leukotrienes (CysLTs) in myeloid cells. In eosinophils, triggers perinuclear arachidonate release and LTC4 synthesis in a PLA2G4A-independent way. In neutrophils, amplifies CysLTs biosynthesis initiated by PLA2G4A. Promotes immune complex clearance in macrophages via stimulating synthesis of CysLTs, which act through CYSLTR1 to trigger phagocytosis. May regulate antigen processing in antigen-presenting cells. In pulmonary macrophages regulates IL33 production required for activation of group 2 innate lymphoid cells. May play a role in the biosynthesis of N-acyl ethanolamines that regulate energy metabolism. Hydrolyzes N-acyl phosphatidylethanolamines to N-acyl lysophosphatidylethanolamines, which are further cleaved by a lysophospholipase D to release N-acyl ethanolamines. The protein is Phospholipase A2 group V (PLA2G5) of Homo sapiens (Human).